A 425-amino-acid chain; its full sequence is Polyadenylate-binding protein RBP47B' (425 aa).

RRM domains lie at 24–102 (RTLW…LNWA), 116–195 (HSIF…AATP), and 237–309 (TTIS…WSKN).

It belongs to the polyadenylate-binding RBP47 family. As to quaternary structure, interacts with the poly(A) tail of mRNA in nucleus.

It localises to the nucleus. The protein resides in the cytoplasmic granule. Its function is as follows. Heterogeneous nuclear ribonucleoprotein (hnRNP)-protein binding the poly(A) tail of mRNA and probably involved in some steps of pre-mRNA maturation. This Arabidopsis thaliana (Mouse-ear cress) protein is Polyadenylate-binding protein RBP47B' (RBP47B').